Here is a 284-residue protein sequence, read N- to C-terminus: 2,3,4,5-tetrahydropyridine-2,6-dicarboxylate N-succinyltransferase (284 aa).

Substrate contacts are provided by Arg-111 and Asp-148.

This sequence belongs to the transferase hexapeptide repeat family. Homotrimer.

The protein resides in the cytoplasm. The enzyme catalyses (S)-2,3,4,5-tetrahydrodipicolinate + succinyl-CoA + H2O = (S)-2-succinylamino-6-oxoheptanedioate + CoA. The protein operates within amino-acid biosynthesis; L-lysine biosynthesis via DAP pathway; LL-2,6-diaminopimelate from (S)-tetrahydrodipicolinate (succinylase route): step 1/3. This Chelativorans sp. (strain BNC1) protein is 2,3,4,5-tetrahydropyridine-2,6-dicarboxylate N-succinyltransferase.